The chain runs to 113 residues: UPF0145 protein SynWH7803_1684 (113 aa).

The protein belongs to the UPF0145 family.

In Synechococcus sp. (strain WH7803), this protein is UPF0145 protein SynWH7803_1684.